Here is a 207-residue protein sequence, read N- to C-terminus: MARYLGPKAKLSRREGTDLFLKSARRSISDKAKFDSKPGQHGRTSGTRTSDYGLQLREKQKVKRMYGVLEKQFRRYFEEADRRRGNTGANLLSVLESRLDNVVYRMGFGSTRAEARQLVSHKAMTVNGQSVNIPSYMVKAGDVIAVRDKSKKQTRIAEALELAKQVGLPAWVDVNADKGEGTFKKVPDRDEFAADINESLIVELYSR.

Positions 29-38 (SDKAKFDSKP) are enriched in basic and acidic residues. A disordered region spans residues 29–54 (SDKAKFDSKPGQHGRTSGTRTSDYGL). The span at 42 to 52 (GRTSGTRTSDY) shows a compositional bias: polar residues. The 64-residue stretch at 97–160 (SRLDNVVYRM…KKQTRIAEAL (64 aa)) folds into the S4 RNA-binding domain.

It belongs to the universal ribosomal protein uS4 family. In terms of assembly, part of the 30S ribosomal subunit. Contacts protein S5. The interaction surface between S4 and S5 is involved in control of translational fidelity.

Functionally, one of the primary rRNA binding proteins, it binds directly to 16S rRNA where it nucleates assembly of the body of the 30S subunit. With S5 and S12 plays an important role in translational accuracy. This Polaromonas naphthalenivorans (strain CJ2) protein is Small ribosomal subunit protein uS4.